Consider the following 492-residue polypeptide: N-succinylglutamate 5-semialdehyde dehydrogenase (492 aa).

220-225 (GSANTG) serves as a coordination point for NAD(+). Residues glutamate 243 and cysteine 277 contribute to the active site.

This sequence belongs to the aldehyde dehydrogenase family. AstD subfamily.

The enzyme catalyses N-succinyl-L-glutamate 5-semialdehyde + NAD(+) + H2O = N-succinyl-L-glutamate + NADH + 2 H(+). It participates in amino-acid degradation; L-arginine degradation via AST pathway; L-glutamate and succinate from L-arginine: step 4/5. Functionally, catalyzes the NAD-dependent reduction of succinylglutamate semialdehyde into succinylglutamate. The sequence is that of N-succinylglutamate 5-semialdehyde dehydrogenase from Escherichia coli (strain ATCC 8739 / DSM 1576 / NBRC 3972 / NCIMB 8545 / WDCM 00012 / Crooks).